The sequence spans 378 residues: Putative dioxygenase VC_1345 (378 aa).

Residues His288, Asp294, and His324 each coordinate Fe cation.

Belongs to the homogentisate dioxygenase family. Fe cation is required as a cofactor.

The protein is Putative dioxygenase VC_1345 of Vibrio cholerae serotype O1 (strain ATCC 39315 / El Tor Inaba N16961).